The chain runs to 967 residues: uncharacterized protein (967 aa).

2 disordered regions span residues 1 to 23 (MQNA…FHDR) and 41 to 72 (FTMH…DPRT). Residues 14–23 (KGRDVNFHDR) show a composition bias toward basic and acidic residues. The span at 60–72 (RLSNYSSAVDPRT) shows a compositional bias: polar residues. The residue at position 86 (serine 86) is a Phosphoserine. 5 disordered regions span residues 135-259 (AVSE…QHLP), 271-296 (SVSR…SPPE), 380-399 (DSTT…APHK), 437-464 (HSYG…FVAD), and 499-544 (GTRF…KSLS). The span at 162-187 (ESSTSNNLETGNSTNTALHNVSSPLE) shows a compositional bias: polar residues. The segment covering 205 to 218 (HDLDEVISEKDTSL) has biased composition (basic and acidic residues). A compositionally biased stretch (basic residues) spans 221 to 234 (RSSRGRSSAPKRRK). Low complexity predominate over residues 278-294 (SPASTPRSSVSSVSSSP). Polar residues predominate over residues 382 to 394 (TTEYVNTESSSKT). The span at 499 to 508 (GTRFHSRSSH) shows a compositional bias: basic residues. Serine 585 bears the Phosphoserine mark. Disordered regions lie at residues 594 to 665 (ESNE…SVND) and 681 to 708 (DHRI…ESQH). The segment covering 608–622 (YDSRESTGHTIKELR) has biased composition (basic and acidic residues). Residues 686–704 (ASDNQNNNNNDANALAENS) show a composition bias toward low complexity. 728-736 (PCVLDVKMG) lines the substrate pocket.

The protein belongs to the inositol phosphokinase (IPK) family.

Its subcellular location is the cytoplasm. This is an uncharacterized protein from Schizosaccharomyces pombe (strain 972 / ATCC 24843) (Fission yeast).